A 446-amino-acid polypeptide reads, in one-letter code: Probable glycine dehydrogenase (decarboxylating) subunit 1 (446 aa).

The protein belongs to the GcvP family. N-terminal subunit subfamily. In terms of assembly, the glycine cleavage system is composed of four proteins: P, T, L and H. In this organism, the P 'protein' is a heterodimer of two subunits.

The enzyme catalyses N(6)-[(R)-lipoyl]-L-lysyl-[glycine-cleavage complex H protein] + glycine + H(+) = N(6)-[(R)-S(8)-aminomethyldihydrolipoyl]-L-lysyl-[glycine-cleavage complex H protein] + CO2. The glycine cleavage system catalyzes the degradation of glycine. The P protein binds the alpha-amino group of glycine through its pyridoxal phosphate cofactor; CO(2) is released and the remaining methylamine moiety is then transferred to the lipoamide cofactor of the H protein. The chain is Probable glycine dehydrogenase (decarboxylating) subunit 1 from Thermococcus onnurineus (strain NA1).